An 872-amino-acid chain; its full sequence is Eukaryotic translation initiation factor 3 subunit C (872 aa).

The segment at 1-100 is disordered; sequence MSRFFRGGDD…KVKSAKDKRF (100 aa). 2 stretches are compositionally biased toward acidic residues: residues 16 to 59 and 72 to 87; these read SSEE…DEEE and SDDE…SDDE. Residues 88 to 100 are compositionally biased toward basic and acidic residues; it reads ATTKVKSAKDKRF. The PCI domain maps to 613 to 787; that stretch reads FHMHINLELL…ETVIFRKGVE (175 aa). Positions 812–872 are disordered; the sequence is TLEQKTQGSA…GGALGNAVRG (61 aa). Gly residues predominate over residues 831-848; that stretch reads GGGQRGGGQRGGRGGART.

Belongs to the eIF-3 subunit C family. Component of the eukaryotic translation initiation factor 3 (eIF-3) complex.

The protein localises to the cytoplasm. Functionally, component of the eukaryotic translation initiation factor 3 (eIF-3) complex, which is involved in protein synthesis of a specialized repertoire of mRNAs and, together with other initiation factors, stimulates binding of mRNA and methionyl-tRNAi to the 40S ribosome. The eIF-3 complex specifically targets and initiates translation of a subset of mRNAs involved in cell proliferation. The chain is Eukaryotic translation initiation factor 3 subunit C (nip-1) from Neurospora crassa (strain ATCC 24698 / 74-OR23-1A / CBS 708.71 / DSM 1257 / FGSC 987).